The sequence spans 424 residues: MAKQIQAIRGMNDILPTQSPLWQKLETVLRETVGSYGYSEIRTPIVESTDLFKRSIGEVTDIVEKEMYTFEDRNGDSLTLRPEGTASTVRAGNEHGLLYNQEQRLWYMGPMFRHERPQKGRYRQFHQFGVEVYGIPTADIDAEVLMLSAKLWEKLGITEHVTLELNTLGDVEERAAYRDALIAFLEQHKEVLDEDSQRRMYSNPLRVLDSKNADVQALLADAPVLMDYFGEDTRSHFSHLCELLEAVGIQYTINPRLVRGLDYYNRTVFEWVTSSLGSQGTVLAGGRYDGLVGQLGGKPTPAVGFAMGLERIVLLLETLELDKDIGPSVDVYVTAMGDNCRVEAIKIAQELRASLPTAKVMSHCGGGNFKKQMKRADKSGATVALVIGEDELANNQVAVKHLREDKAQELVARDALATYIAELI.

This sequence belongs to the class-II aminoacyl-tRNA synthetase family. As to quaternary structure, homodimer.

It is found in the cytoplasm. The catalysed reaction is tRNA(His) + L-histidine + ATP = L-histidyl-tRNA(His) + AMP + diphosphate + H(+). This Shewanella halifaxensis (strain HAW-EB4) protein is Histidine--tRNA ligase.